The following is a 716-amino-acid chain: MDVELEVSGFIQRLRHSRLRGLLVVGTGDVKAWAEKLAGYAGGDCALVSPSAGRLPGICRSWAPPGSIERILGGEYAAAIIAVPGLLRPSIIAGAGETVRSGGFLAIVADPPDRWDPGPPRGTGLYREYLFSAIRDNPVHLWIDDESGRIVSESFLEYTGVGAQGWSPGRYKPSPGSGVPRRLVSACRSESQARALESLARFFRGRWRSALVRGDRGRGKSYVIGLALAYAAWRRLIGRAVLVGPTPLSVQSVMAGLLRGLDVLGLKGHRVVRTSGGEVIRVSGPWFRIAYEQPDTAEPSPLVVVDEAAAVGVARVRRLSWRSGKSLVATTIHGYEGSGRAFARLLPNILPKPFIELELREPIRYLPGDPLEEWLYTVFMLRAEPQEPGDPSAARPVEVSREVLARDREVLRSVYGILVQAHYRNTPDDLLAMLESPHHRIYALEADGTPVAVADVVLEGPDVEEEARIALERLLYMAGSPGSGVVSWRVSRIAVHEDLQRRGLGSRLLRHVEAQARESGASLVTTMFSRHDVIPFWLKNGFKPFYVSPRYNRVTGEKNVALAKPLDSAGAEILEKASKTLALKLALAGSSIYRDLAAEKLALLLHHTPATAPPLYLTRIQARHLEGFLKGEVMADQAFDAVYIALLSTLLATRSWNPVEPGLVGAVARVVQGKPYSEVASIIGASTVDEAVGKVEEYIRGILEGARSLWSGRVIP.

ATP-binding positions include Gln192, 217 to 226, and Arg364; that span reads GRGKSYVIGL. Residues 401-567 enclose the N-acetyltransferase domain; sequence REVLARDREV…KNVALAKPLD (167 aa). Residues 493 to 495 and 500 to 506 contribute to the acetyl-CoA site; these read IAV and QRRGLGS.

Belongs to the RNA cytidine acetyltransferase family. TmcA subfamily.

The protein localises to the cytoplasm. The catalysed reaction is cytidine(34) in elongator tRNA(Met) + acetyl-CoA + ATP + H2O = N(4)-acetylcytidine(34) in elongator tRNA(Met) + ADP + phosphate + CoA + H(+). In terms of biological role, catalyzes the formation of N(4)-acetylcytidine (ac(4)C) at the wobble position of tRNA(Met), by using acetyl-CoA as an acetyl donor and ATP (or GTP). The protein is tRNA(Met) cytidine acetyltransferase TmcA of Aeropyrum pernix (strain ATCC 700893 / DSM 11879 / JCM 9820 / NBRC 100138 / K1).